The chain runs to 274 residues: Rhamnulose-1-phosphate aldolase (274 aa).

Glu-117 is an active-site residue. 3 residues coordinate Zn(2+): His-141, His-143, and His-212.

The protein belongs to the aldolase class II family. RhaD subfamily. Homotetramer. It depends on Zn(2+) as a cofactor.

Its subcellular location is the cytoplasm. It carries out the reaction L-rhamnulose 1-phosphate = (S)-lactaldehyde + dihydroxyacetone phosphate. It functions in the pathway carbohydrate degradation; L-rhamnose degradation; glycerone phosphate from L-rhamnose: step 3/3. In terms of biological role, catalyzes the reversible cleavage of L-rhamnulose-1-phosphate to dihydroxyacetone phosphate (DHAP) and L-lactaldehyde. The polypeptide is Rhamnulose-1-phosphate aldolase (Escherichia coli (strain K12 / MC4100 / BW2952)).